We begin with the raw amino-acid sequence, 568 residues long: Acetate--CoA ligase CCL3 (568 aa).

ATP contacts are provided by residues 204 to 212, 340 to 345, Asp-437, 449 to 452, and Lys-547; these read TSGTTASPK, HTYGLS, and IKDR. The tract at residues 272–340 is SBD1; sequence TAKGVYSAIA…MSEKGFKVAH (69 aa). The interval 341–417 is SBD2; it reads TYGLSETYGP…MRGNAVMKGY (77 aa).

Belongs to the ATP-dependent AMP-binding enzyme family. Mostly expressed in glandular trichomes (lupulin glands) after flowering and in old leaves, and, to a lower extent, in stems, young leaves, cones and flowers.

The protein localises to the cytoplasm. Its subcellular location is the cytosol. It carries out the reaction acetate + ATP + CoA = acetyl-CoA + AMP + diphosphate. The catalysed reaction is propanoate + ATP + CoA = propanoyl-CoA + AMP + diphosphate. The enzyme catalyses butanoate + ATP + CoA = butanoyl-CoA + AMP + diphosphate. It catalyses the reaction 3-methylbutanoate + ATP + CoA = 3-methylbutanoyl-CoA + AMP + diphosphate. It carries out the reaction pentanoate + ATP + CoA = pentanoyl-CoA + AMP + diphosphate. The catalysed reaction is hexanoate + ATP + CoA = hexanoyl-CoA + AMP + diphosphate. The enzyme catalyses 2-methylpropanoate + ATP + CoA = 2-methylpropanoyl-CoA + AMP + diphosphate. It catalyses the reaction 2-methylbutanoate + ATP + CoA = 2-methylbutanoyl-CoA + AMP + diphosphate. It carries out the reaction 2-methylpentanoate + ATP + CoA = 2-methylpentanoyl-CoA + AMP + diphosphate. The catalysed reaction is 3-methylpentanoate + ATP + CoA = 3-methylpentanoyl-CoA + AMP + diphosphate. The enzyme catalyses 4-methylpentanoate + ATP + CoA = 4-methylpentanoyl-CoA + AMP + diphosphate. It functions in the pathway secondary metabolite biosynthesis. Its function is as follows. Involved in the biosynthesis of prenylated phenolics natural products which contribute to the bitter taste of beer and display broad biological activities. Catalyzes the ligation of CoA on propanoate to produce propanoyl-CoA. Can also use 2-methylpropanoate (isobutyric acid), acetate, butanoate, isovalerate, pentanoate, hexanoate, 2-methylbutanoate, 2-methylpentanoate, 3-methylpentanoate and 4-methylpentanoate as substrates with a lower efficiency. Triggers the formation of very short chain acyl-CoAs from the corresponding fatty acids, including acetic acid, propanoic acid, butyric acid and its isomer. This is Acetate--CoA ligase CCL3 from Humulus lupulus (European hop).